A 210-amino-acid chain; its full sequence is Glutathione S-transferase 3 (210 aa).

Residues 1–80 (MDFYYLPLSA…YLVEKYGKQN (80 aa)) enclose the GST N-terminal domain. Glutathione-binding positions include serine 9, 50 to 52 (HTI), and 64 to 66 (ESR). The GST C-terminal domain maps to 87–208 (CPKKRALINQ…AGCLEMKKYF (122 aa)).

Belongs to the GST superfamily. Theta family. Homodimer.

The catalysed reaction is RX + glutathione = an S-substituted glutathione + a halide anion + H(+). Its function is as follows. Conjugation of reduced glutathione to a wide number of exogenous and endogenous hydrophobic electrophiles. This Musca domestica (House fly) protein is Glutathione S-transferase 3 (Gst3).